The primary structure comprises 200 residues: Serotonin N-acetyltransferase 2, chloroplastic (200 aa).

The N-terminal 41 residues, 1 to 41 (MQMQAARPRVGVRPRGGIRPFPLPTLSFNNNSNRSACACAC), are a transit peptide targeting the chloroplast. The 141-residue stretch at 55–195 (FAVRRSSTGL…MAFYRSRQQI (141 aa)) folds into the N-acetyltransferase domain.

Its subcellular location is the cytoplasm. The protein localises to the plastid. The protein resides in the chloroplast. The catalysed reaction is serotonin + acetyl-CoA = N-acetylserotonin + CoA + H(+). The enzyme catalyses tyramine + acetyl-CoA = N-acetyltyramine + CoA + H(+). It catalyses the reaction tryptamine + acetyl-CoA = N-acetyltryptamine + CoA + H(+). It carries out the reaction 5-methoxytryptamine + acetyl-CoA = melatonin + CoA + H(+). It participates in aromatic compound metabolism; melatonin biosynthesis; melatonin from serotonin: step 1/2. Its function is as follows. Catalyzes the N-acetylation of serotonin into N-acetylserotonin, the penultimate step in the synthesis of melatonin. Catalyzes in vitro the N-acetylation of tryptamine to produce N-acetyltryptamine, 5-methoxytryptamine to produce melatonin and tyramine to produce N-acetyltyramine. This is Serotonin N-acetyltransferase 2, chloroplastic from Oryza sativa subsp. japonica (Rice).